The sequence spans 419 residues: Serine hydroxymethyltransferase 1 (419 aa).

(6S)-5,6,7,8-tetrahydrofolate contacts are provided by residues leucine 121 and 125–127 (GHL). Position 230 is an N6-(pyridoxal phosphate)lysine (lysine 230). Residue 356-358 (SPF) participates in (6S)-5,6,7,8-tetrahydrofolate binding.

This sequence belongs to the SHMT family. Homodimer. It depends on pyridoxal 5'-phosphate as a cofactor.

Its subcellular location is the cytoplasm. The enzyme catalyses (6R)-5,10-methylene-5,6,7,8-tetrahydrofolate + glycine + H2O = (6S)-5,6,7,8-tetrahydrofolate + L-serine. The protein operates within one-carbon metabolism; tetrahydrofolate interconversion. Its pathway is amino-acid biosynthesis; glycine biosynthesis; glycine from L-serine: step 1/1. Its function is as follows. Catalyzes the reversible interconversion of serine and glycine with tetrahydrofolate (THF) serving as the one-carbon carrier. This reaction serves as the major source of one-carbon groups required for the biosynthesis of purines, thymidylate, methionine, and other important biomolecules. Also exhibits THF-independent aldolase activity toward beta-hydroxyamino acids, producing glycine and aldehydes, via a retro-aldol mechanism. The sequence is that of Serine hydroxymethyltransferase 1 from Colwellia psychrerythraea (strain 34H / ATCC BAA-681) (Vibrio psychroerythus).